The chain runs to 207 residues: Glutathione S-transferase 3 (207 aa).

A GST N-terminal domain is found at Val2–Gly79. Glutathione is bound by residues Tyr8, Lys43, Gly49–Val51, and Gln63–Ser64. Residues Thr81 to Phe207 form the GST C-terminal domain.

It belongs to the GST superfamily. Sigma family.

It carries out the reaction RX + glutathione = an S-substituted glutathione + a halide anion + H(+). Conjugation of reduced glutathione to a wide number of exogenous and endogenous hydrophobic electrophiles. This chain is Glutathione S-transferase 3 (gst-3), found in Caenorhabditis elegans.